The sequence spans 74 residues: Acyclotide phyb-K (74 aa).

A signal peptide spans 1–24 (MARVNSLKCALCFIVLILFVQLNC). Residues 25–43 (IPETRVMAVELSRVFLQTS) constitute a propeptide that is removed on maturation. Disulfide bonds link Cys47–Cys64, Cys51–Cys66, and Cys56–Cys71.

Post-translationally, contains 3 disulfide bonds. Expressed in midvein, lamina and periphery of leaves (at protein level).

In terms of biological role, probably participates in a plant defense mechanism. This Petunia hybrida (Petunia) protein is Acyclotide phyb-K.